The sequence spans 363 residues: mRNA decay activator protein ZFP36L2-A (363 aa).

Positions 131-136 (RYKTEL) match the RNA-binding motif. C3H1-type zinc fingers lie at residues 131–159 (RYKTELCRPFEESGACKYGEKCQFAHGFH) and 169–197 (KYKTELCRTFHTIGFCPYGPRCHFIHNAE). An RNA-binding region spans residues 148-189 (YGEKCQFAHGFHELRSLTRHPKYKTELCRTFHTIGFCPYGPR). The disordered stretch occupies residues 308-349 (ESPVFDAPPSPPDSLSDRDSYLSGSLSSGSLSGSDSPTLDSN). Positions 328–347 (YLSGSLSSGSLSGSDSPTLD) are enriched in low complexity.

Phosphorylated. Widely expressed in adults.

The protein resides in the nucleus. It is found in the cytoplasm. In terms of biological role, zinc-finger RNA-binding protein that destabilizes several cytoplasmic AU-rich element (ARE)-containing mRNA transcripts by promoting their poly(A) tail removal or deadenylation, and hence provide a mechanism for attenuating protein synthesis. Acts as a 3'-untranslated region (UTR) ARE mRNA-binding adapter protein to communicate signaling events to the mRNA decay machinery. Functions by recruiting the CCR4-NOT deadenylase complex and probably other components of the cytoplasmic RNA decay machinery to the bound ARE-containing mRNAs, and hence promotes ARE-mediated mRNA deadenylation and decay processes. Binds to 3'-UTR ARE of numerous mRNAs. Also induces the degradation of ARE-containing mRNAs even in absence of poly(A) tail. Required for tubulogenesis during pronephros development. The polypeptide is mRNA decay activator protein ZFP36L2-A (zfp36l2-A) (Xenopus laevis (African clawed frog)).